The chain runs to 78 residues: MGKKCQLTGKKANNAFAVSHSHRRTHKLQEANLQWKRVWWPQEKRWVKLRLSTKAIKTLEKKGLAAFAREAGINLNQV.

This sequence belongs to the bacterial ribosomal protein bL28 family.

This chain is Large ribosomal subunit protein bL28, found in Acaryochloris marina (strain MBIC 11017).